We begin with the raw amino-acid sequence, 569 residues long: Atlastin-2 (569 aa).

An N-terminal hypervariable region (HVR) region spans residues 1-49 (MAEGGSLRNRTRFGSRSNEAMNHVDYPDENFVEEIQLNSDTEVMEKPRP). The Cytoplasmic portion of the chain corresponds to 1–464 (MAEGGSLRNR…NIFYAARTPA (464 aa)). A GB1/RHD3-type G domain is found at 80-324 (DLNVVVLSVA…LVPLLLAPEN (245 aa)). Residues Arg-93, Lys-94, Gly-95, Lys-96, Ser-97, Phe-98, Gln-163, Arg-232, and Asp-233 each coordinate GDP. GTP contacts are provided by Arg-93, Lys-94, Gly-95, Lys-96, Ser-97, and Phe-98. Mg(2+) is bound at residue Ser-97. The GTP site is built by Arg-232 and Asp-233. A coiled-coil region spans residues 244-272 (LEGGNKFLEKRLQVKQNQHEELQNVRKHI). 2 residues coordinate GDP: Val-291 and Asn-294. Val-291 is a binding site for GTP. The tract at residues 362–453 (MLQATAEANN…YANFLKHNDG (92 aa)) is 3HB (three-helix bundle) domain. Residues 454 to 462 (KNIFYAART) form a linker region. Residues 465–485 (TLFAVMFAMYIISGLTGFIGM) form a helical membrane-spanning segment. The Lumenal portion of the chain corresponds to 486–487 (NS). A helical membrane pass occupies residues 488-508 (IATICNLIMGLTLLSFCTWAY). The Cytoplasmic segment spans residues 509-569 (VKYSGEFREL…DQVSGRLKTN (61 aa)). The segment at 535-569 (KPLSDNLMEDNIRQTVRNSIKAGLTDQVSGRLKTN) is autoinhibitory domain.

This sequence belongs to the TRAFAC class dynamin-like GTPase superfamily. GB1/RHD3 GTPase family. GB1 subfamily. In terms of assembly, monomeric and homodimeric. The homodimer, transiently formed by two molecules on opposing membranes, is the active form mediating ER membrane fusion.

It localises to the endoplasmic reticulum membrane. It catalyses the reaction GTP + H2O = GDP + phosphate + H(+). Functionally, atlastin-2 (ATL2) is a membrane-anchored GTPase that mediates the GTP-dependent fusion of endoplasmic reticulum (ER) membranes, maintaining the continuous ER network. It facilitates the formation of three-way junctions where ER tubules intersect. Two atlastin-2 on neighboring ER tubules bind GTP and form loose homodimers through the GB1/RHD3-type G domains and 3HB regions. Upon GTP hydrolysis, the 3HB regions tighten, pulling the membranes together to drive their fusion. After fusion, the homodimer disassembles upon release of inorganic phosphate (Pi). Subsequently, GDP dissociates, resetting the monomers to a conformation ready for a new fusion cycle. This Xenopus laevis (African clawed frog) protein is Atlastin-2 (atl2).